We begin with the raw amino-acid sequence, 710 residues long: MARTVPLERVRNIGIAAHIDAGKTTTTERILFYSGLVHKLGEVHEGTTVTDWMAQERERGITITAAAITTRWTKRDPKNPSQPLAGAPEYTINIIDTPGHVDFTIEVERSMRVLDGVIAVFDSVGGVQPQSETVWRQANRYNVPRIAFVNKMDRMGANFLKVYNQIRERLKANAVPIQLPIGAEDEFRGIVDLVRLQANIYMDEIGKDIRPAPIPEEMKDLVAEYRAKLVEAVAETDEALMEKYFAEEDLSEADLMAGLRKGTISGQIVPMLCGSAFKNKGVQMLLDAVVDYLPSPIDIPAIKGVLPDGSEVSRKASDDEPFSALAFKLMSDKYGDLTFIRVYSGVLTKGTYVLNSTKNKKERISRLVVLKADERLDVDELRAGDLGAVLGLKDTTTGDTLCDENAPVILESLYIPEPVISVAVEPKTKADIDKLSKALQALAKEDPTFRVSVDPETNQTIISGMGELHLEILVDRMLREFNVEANVGNPQVAYRETIRKPVSRVEGKFIRQTGGRGQYGHVVIDLEPAEPGTGFEFVSKIVGGVIPKEYIPPAEQGIREACESGVLAGYPLIDIRVTLVDGSYHEVDSSEMAFKIAGSMALKEAARRANPVLLEPMMKVEVEVPEAFVGDVIGDINARRGQMEGMSTEGGISKVNAKVPLAEMFGYATDIRSKTQGRGIFTMEFSHYEEVPRSIAEAIIAKSKGSGVTN.

The 290-residue stretch at glutamate 8–isoleucine 297 folds into the tr-type G domain. Residues alanine 17–threonine 24, aspartate 96–histidine 100, and asparagine 150–aspartate 153 contribute to the GTP site.

Belongs to the TRAFAC class translation factor GTPase superfamily. Classic translation factor GTPase family. EF-G/EF-2 subfamily.

It localises to the cytoplasm. Functionally, catalyzes the GTP-dependent ribosomal translocation step during translation elongation. During this step, the ribosome changes from the pre-translocational (PRE) to the post-translocational (POST) state as the newly formed A-site-bound peptidyl-tRNA and P-site-bound deacylated tRNA move to the P and E sites, respectively. Catalyzes the coordinated movement of the two tRNA molecules, the mRNA and conformational changes in the ribosome. This is Elongation factor G from Synechococcus sp. (strain JA-3-3Ab) (Cyanobacteria bacterium Yellowstone A-Prime).